A 184-amino-acid polypeptide reads, in one-letter code: Ras-related protein O-Krev (184 aa).

10 to 17 (GSGGVGKS) contacts GTP. Residues 32 to 40 (YDPTIEDSY) carry the Effector region motif. Residues 57–61 (DTAGT) and 116–119 (NKCD) each bind GTP. Cys181 is modified (cysteine methyl ester). A lipid anchor (S-geranylgeranyl cysteine) is attached at Cys181. Positions 182–184 (TLL) are cleaved as a propeptide — removed in mature form.

This sequence belongs to the small GTPase superfamily. Ras family.

It localises to the cell membrane. It catalyses the reaction GTP + H2O = GDP + phosphate + H(+). In Diplobatis ommata (Ocellated electric ray), this protein is Ras-related protein O-Krev.